We begin with the raw amino-acid sequence, 435 residues long: Adenylosuccinate synthetase (435 aa).

GTP-binding positions include 13-19 (GDEGKGK) and 41-43 (GHT). D14 acts as the Proton acceptor in catalysis. Residues D14 and G41 each contribute to the Mg(2+) site. IMP-binding positions include 14 to 17 (DEGK), 39 to 42 (NAGH), T131, R145, Q226, T241, and R309. Residue H42 is the Proton donor of the active site. 305 to 311 (TVTGRKR) is a binding site for substrate. GTP is bound by residues R311, 337-339 (KLD), and 419-421 (STG).

This sequence belongs to the adenylosuccinate synthetase family. In terms of assembly, homodimer. It depends on Mg(2+) as a cofactor.

It is found in the cytoplasm. The catalysed reaction is IMP + L-aspartate + GTP = N(6)-(1,2-dicarboxyethyl)-AMP + GDP + phosphate + 2 H(+). It participates in purine metabolism; AMP biosynthesis via de novo pathway; AMP from IMP: step 1/2. Plays an important role in the de novo pathway of purine nucleotide biosynthesis. Catalyzes the first committed step in the biosynthesis of AMP from IMP. The chain is Adenylosuccinate synthetase from Dechloromonas aromatica (strain RCB).